The sequence spans 283 residues: Acetyl-coenzyme A carboxylase carboxyl transferase subunit beta (283 aa).

The region spanning 29 to 283 is the CoA carboxyltransferase N-terminal domain; sequence LWVACPKCQQ…LKLHERGAHY (255 aa). Zn(2+) is bound by residues Cys33, Cys36, Cys51, and Cys54. Residues 33 to 54 form a C4-type zinc finger; that stretch reads CPKCQQSIYHKDLGYYRTCPVC.

Belongs to the AccD/PCCB family. In terms of assembly, acetyl-CoA carboxylase is a heterohexamer composed of biotin carboxyl carrier protein (AccB), biotin carboxylase (AccC) and two subunits each of ACCase subunit alpha (AccA) and ACCase subunit beta (AccD). Zn(2+) serves as cofactor.

The protein resides in the cytoplasm. It carries out the reaction N(6)-carboxybiotinyl-L-lysyl-[protein] + acetyl-CoA = N(6)-biotinyl-L-lysyl-[protein] + malonyl-CoA. Its pathway is lipid metabolism; malonyl-CoA biosynthesis; malonyl-CoA from acetyl-CoA: step 1/1. Component of the acetyl coenzyme A carboxylase (ACC) complex. Biotin carboxylase (BC) catalyzes the carboxylation of biotin on its carrier protein (BCCP) and then the CO(2) group is transferred by the transcarboxylase to acetyl-CoA to form malonyl-CoA. This Latilactobacillus sakei subsp. sakei (strain 23K) (Lactobacillus sakei subsp. sakei) protein is Acetyl-coenzyme A carboxylase carboxyl transferase subunit beta.